We begin with the raw amino-acid sequence, 259 residues long: Small ribosomal subunit protein uS2 (259 aa).

The disordered stretch occupies residues 228-259; that stretch reads VSFGSEEAEENNQKEDNEEIFEIEDVDESEEM. Acidic residues predominate over residues 233 to 259; it reads EEAEENNQKEDNEEIFEIEDVDESEEM.

It belongs to the universal ribosomal protein uS2 family.

This chain is Small ribosomal subunit protein uS2, found in Thermosipho africanus (strain TCF52B).